Reading from the N-terminus, the 389-residue chain is S-adenosylmethionine synthase (389 aa).

H15 provides a ligand contact to ATP. Residue D17 participates in Mg(2+) binding. A K(+)-binding site is contributed by E43. 2 residues coordinate L-methionine: E56 and Q99. The interval 99 to 109 (QSPDIAQGVNE) is flexible loop. ATP is bound by residues 166–168 (DAK), 234–235 (RF), D243, 249–250 (RK), A266, and K270. D243 is an L-methionine binding site. Position 274 (K274) interacts with L-methionine.

It belongs to the AdoMet synthase family. Homotetramer; dimer of dimers. Mg(2+) is required as a cofactor. Requires K(+) as cofactor.

It localises to the cytoplasm. The catalysed reaction is L-methionine + ATP + H2O = S-adenosyl-L-methionine + phosphate + diphosphate. Its pathway is amino-acid biosynthesis; S-adenosyl-L-methionine biosynthesis; S-adenosyl-L-methionine from L-methionine: step 1/1. Its function is as follows. Catalyzes the formation of S-adenosylmethionine (AdoMet) from methionine and ATP. The overall synthetic reaction is composed of two sequential steps, AdoMet formation and the subsequent tripolyphosphate hydrolysis which occurs prior to release of AdoMet from the enzyme. In Neisseria gonorrhoeae (strain NCCP11945), this protein is S-adenosylmethionine synthase.